A 289-amino-acid polypeptide reads, in one-letter code: Proteasome subunit beta (289 aa).

Positions 1–55 are cleaved as a propeptide — removed in mature form; by autocatalysis; the sequence is MTWPLPDRLSINSAISGSAVDLSSFAEFLRRQAPELLPASIKHGGGAVGDQLPHA. Catalysis depends on Thr-56, which acts as the Nucleophile.

This sequence belongs to the peptidase T1B family. The 20S proteasome core is composed of 14 alpha and 14 beta subunits that assemble into four stacked heptameric rings, resulting in a barrel-shaped structure. The two inner rings, each composed of seven catalytic beta subunits, are sandwiched by two outer rings, each composed of seven alpha subunits. The catalytic chamber with the active sites is on the inside of the barrel. Has a gated structure, the ends of the cylinder being occluded by the N-termini of the alpha-subunits. Is capped by the proteasome-associated ATPase, ARC.

Its subcellular location is the cytoplasm. The enzyme catalyses Cleavage of peptide bonds with very broad specificity.. It functions in the pathway protein degradation; proteasomal Pup-dependent pathway. With respect to regulation, the formation of the proteasomal ATPase ARC-20S proteasome complex, likely via the docking of the C-termini of ARC into the intersubunit pockets in the alpha-rings, may trigger opening of the gate for substrate entry. Interconversion between the open-gate and close-gate conformations leads to a dynamic regulation of the 20S proteasome proteolysis activity. Its function is as follows. Component of the proteasome core, a large protease complex with broad specificity involved in protein degradation. In Mycobacterium marinum (strain ATCC BAA-535 / M), this protein is Proteasome subunit beta.